Reading from the N-terminus, the 177-residue chain is Interleukin-19 (177 aa).

The first 24 residues, 1-24 (MKLQCVSLWLLGTILILCSVDNHG), serve as a signal peptide directing secretion. 3 cysteine pairs are disulfide-bonded: cysteine 28/cysteine 121, cysteine 75/cysteine 127, and cysteine 76/cysteine 129. Asparagine 56 carries an N-linked (GlcNAc...) asparagine glycan. The N-linked (GlcNAc...) asparagine glycan is linked to asparagine 135.

It belongs to the IL-10 family.

Its subcellular location is the secreted. In terms of biological role, cytokine that functions as an anti-inflammatory and proangiogenic factor. Polarizes adaptive immunity to an anti-inflammatory phenotype through induction of T-helper 2 responses by both down-regulation of IFN-gamma and up-regulation of IL4 and IL13. Produced by osteocytes, stimulates granulopoiesis and neutrophil formation. Exerts its biological effect through a receptor complex consisting of a heterodimer of IL20RA and IL20RB. In turn, activates the Janus kinase (JAK) and signal transducer and activator of transcription (STAT) pathway, and importantly, STAT3. The sequence is that of Interleukin-19 (IL19) from Homo sapiens (Human).